The following is a 360-amino-acid chain: DNA replication and repair protein RecF (360 aa).

G30–T37 contacts ATP.

It belongs to the RecF family.

It is found in the cytoplasm. The RecF protein is involved in DNA metabolism; it is required for DNA replication and normal SOS inducibility. RecF binds preferentially to single-stranded, linear DNA. It also seems to bind ATP. The sequence is that of DNA replication and repair protein RecF from Shewanella piezotolerans (strain WP3 / JCM 13877).